The sequence spans 421 residues: 4-aminobutyrate aminotransferase PuuE (421 aa).

Pyridoxal 5'-phosphate contacts are provided by residues 110-111 (GA) and 238-241 (DEVQ). Lys-267 bears the N6-(pyridoxal phosphate)lysine mark. Position 296 (Thr-296) interacts with pyridoxal 5'-phosphate.

It belongs to the class-III pyridoxal-phosphate-dependent aminotransferase family. Pyridoxal 5'-phosphate is required as a cofactor.

It carries out the reaction 4-aminobutanoate + 2-oxoglutarate = succinate semialdehyde + L-glutamate. Its pathway is amine and polyamine degradation; putrescine degradation; succinate semialdehyde from 4-aminobutanoate. With respect to regulation, completely inhibited by succinate and low-aeration conditions. Its function is as follows. Catalyzes the transfer of the amino group from gamma-aminobutyrate (GABA) to alpha-ketoglutarate (KG) to yield succinic semialdehyde (SSA). PuuE is important for utilization of putrescine as the sole nitrogen or carbon source. The protein is 4-aminobutyrate aminotransferase PuuE (puuE) of Escherichia coli (strain K12).